Here is a 2635-residue protein sequence, read N- to C-terminus: Large tegument protein deneddylase (2635 aa).

Positions 1–233 (MAAQPLYMEG…LHGPRMDISR (233 aa)) are deubiquitination activity. Positions 9-223 (EGMASTHQAN…NHYRTIVFEE (215 aa)) constitute a Peptidase C76 domain. Active-site residues include Cys-29, Asp-159, and His-161. Disordered stretches follow at residues 243 to 497 (ITSP…DRYA), 2238 to 2269 (PLTI…QQPK), 2357 to 2438 (RTAL…KRAA), and 2500 to 2533 (KAGW…DDKS). The span at 245–255 (SPSVSPAPSEA) shows a compositional bias: low complexity. 2 stretches are compositionally biased toward basic and acidic residues: residues 256–270 (PLRR…ETRP) and 282–295 (PTDR…DRPP). Positions 316 to 325 (KTGRGGNEGR) are interaction with inner tegument protein. A compositionally biased stretch (basic and acidic residues) spans 330 to 346 (PPDEHQPPHITAEHMDQ). Residues 448-461 (DDPLTPLYPLTDTP) show a composition bias toward low complexity. The span at 2379-2402 (TLTFRLPPTAPTPATAALETKTTP) shows a compositional bias: low complexity. The span at 2425–2437 (HARDTSPPAEKRA) shows a compositional bias: basic and acidic residues.

It belongs to the herpesviridae large tegument protein family. Interacts with host CUL1 and CUL4A; these interactions inhibit the E3 ligase activity of cullins. Interacts with inner tegument protein. Interacts with capsid vertex specific component CVC2. Interacts with the major capsid protein/MCP.

It localises to the virion tegument. Its subcellular location is the host cytoplasm. It is found in the host nucleus. It catalyses the reaction Thiol-dependent hydrolysis of ester, thioester, amide, peptide and isopeptide bonds formed by the C-terminal Gly of ubiquitin (a 76-residue protein attached to proteins as an intracellular targeting signal).. Large tegument protein that plays multiple roles in the viral cycle. During viral entry, remains associated with the capsid while most of the tegument is detached and participates in the capsid transport toward the host nucleus. Plays a role in the routing of the capsid at the nuclear pore complex and subsequent uncoating. Within the host nucleus, acts as a deneddylase and promotes the degradation of nuclear CRLs (cullin-RING ubiquitin ligases) and thereby stabilizes nuclear CRL substrates, while cytoplasmic CRLs remain unaffected. These modifications prevent host cell cycle S-phase progression and create a favorable environment allowing efficient viral genome replication. Participates later in the secondary envelopment of capsids. Indeed, plays a linker role for the association of the outer viral tegument to the capsids together with the inner tegument protein. This Homo sapiens (Human) protein is Large tegument protein deneddylase.